Reading from the N-terminus, the 40-residue chain is Small polypeptide DEVIL 3 (40 aa).

The interval 9–40 is required for DVL/RTFL small polypeptide activity; that stretch reads PCNKKLGGYLKEQKGRLYIIRRCVVMLICWHD. A helical transmembrane segment spans residues 12–28; it reads KKLGGYLKEQKGRLYII.

Belongs to the DVL/RTFL small polypeptides family. Mostly expressed in flowers and stems, and, to a lower extent, in roots and leaves.

The protein localises to the cell membrane. Its function is as follows. Small polypeptide acting as a regulatory molecule which coordinates cellular responses required for differentiation, growth and development, including leaves shape, pedicule elongation, inflorescence organization and fruit maturation, probably by restricting polar cell proliferation in lateral organs and coordinating socket cell recruitment and differentiation at trichome sites. This is Small polypeptide DEVIL 3 from Arabidopsis thaliana (Mouse-ear cress).